A 102-amino-acid polypeptide reads, in one-letter code: Urease subunit beta (102 aa).

This sequence belongs to the urease beta subunit family. In terms of assembly, heterotrimer of UreA (gamma), UreB (beta) and UreC (alpha) subunits. Three heterotrimers associate to form the active enzyme.

The protein localises to the cytoplasm. The enzyme catalyses urea + 2 H2O + H(+) = hydrogencarbonate + 2 NH4(+). It functions in the pathway nitrogen metabolism; urea degradation; CO(2) and NH(3) from urea (urease route): step 1/1. This Trichodesmium erythraeum (strain IMS101) protein is Urease subunit beta.